A 62-amino-acid polypeptide reads, in one-letter code: Small ribosomal subunit protein eS27 (62 aa).

Zn(2+) is bound by residues Cys-17, Cys-20, Cys-36, and Cys-39. Residues 17 to 39 form a C4-type zinc finger; sequence CNDCENEQIIFGSASRKITCVVC.

Belongs to the eukaryotic ribosomal protein eS27 family. In terms of assembly, part of the 30S ribosomal subunit. The cofactor is Zn(2+).

The sequence is that of Small ribosomal subunit protein eS27 from Methanosarcina barkeri (strain Fusaro / DSM 804).